The chain runs to 131 residues: Arsenate reductase (131 aa).

Residues Cys10, Cys82, and Cys89 each act as nucleophile in the active site. Intrachain disulfides connect Cys10–Cys82 and Cys82–Cys89.

This sequence belongs to the low molecular weight phosphotyrosine protein phosphatase family. Thioredoxin-coupled ArsC subfamily.

The protein resides in the cytoplasm. The catalysed reaction is arsenate + [thioredoxin]-dithiol + H(+) = arsenite + [thioredoxin]-disulfide + H2O. Catalyzes the reduction of arsenate [As(V)] to arsenite [As(III)]. This chain is Arsenate reductase, found in Staphylococcus xylosus.